A 93-amino-acid chain; its full sequence is MSEEKAVSTEERASRKVRVGYVVSDKMEKTIVVELEDRVKHKLYGKIIRRTTKVKAHDENGVAGVGDRVQLMETRPLSATKHWRLVEVLEKAK.

This sequence belongs to the universal ribosomal protein uS17 family. Part of the 30S ribosomal subunit.

In terms of biological role, one of the primary rRNA binding proteins, it binds specifically to the 5'-end of 16S ribosomal RNA. The polypeptide is Small ribosomal subunit protein uS17 (Rhodococcus erythropolis (strain PR4 / NBRC 100887)).